A 393-amino-acid chain; its full sequence is UDP-glucose 6-dehydrogenase (393 aa).

Positions 11, 31, 36, 85, 120, and 147 each coordinate NAD(+). Residues Glu-143–Glu-147, Lys-199, Asn-203, Tyr-244–Ser-248, and Gly-252 contribute to the substrate site. Tyr-254 provides a ligand contact to NAD(+). The active-site Nucleophile is the Cys-255. Lys-258 lines the NAD(+) pocket. Residue Lys-309 coordinates substrate. Arg-316 contacts NAD(+).

It belongs to the UDP-glucose/GDP-mannose dehydrogenase family. In terms of assembly, homodimer.

It carries out the reaction UDP-alpha-D-glucose + 2 NAD(+) + H2O = UDP-alpha-D-glucuronate + 2 NADH + 3 H(+). Its pathway is nucleotide-sugar biosynthesis; UDP-alpha-D-glucuronate biosynthesis; UDP-alpha-D-glucuronate from UDP-alpha-D-glucose: step 1/1. It functions in the pathway capsule biogenesis; capsule polysaccharide biosynthesis. Its function is as follows. Catalyzes the formation of UDP-glucuronic acid which is required for capsular polysaccharide synthesis. Does not catalyze the formation of glucuronamide moiety of the capsular polysaccharide. The protein is UDP-glucose 6-dehydrogenase of Campylobacter jejuni subsp. jejuni serotype O:2 (strain ATCC 700819 / NCTC 11168).